The following is a 336-amino-acid chain: Holliday junction branch migration complex subunit RuvB (336 aa).

The interval 1–182 (MKERIVNLET…FGMSFRMQFY (182 aa)) is large ATPase domain (RuvB-L). ATP is bound by residues Leu21, Arg22, Gly63, Lys66, Thr67, Ser68, 129–131 (EDF), Arg172, Tyr182, and Arg219. Thr67 serves as a coordination point for Mg(2+). The tract at residues 183–253 (SPSELALIIK…ITLHALNELG (71 aa)) is small ATPAse domain (RuvB-S). Residues 256 to 336 (ELGFDEADLA…IPTLKSQTLF (81 aa)) are head domain (RuvB-H). 2 residues coordinate DNA: Arg310 and Arg315.

Belongs to the RuvB family. As to quaternary structure, homohexamer. Forms an RuvA(8)-RuvB(12)-Holliday junction (HJ) complex. HJ DNA is sandwiched between 2 RuvA tetramers; dsDNA enters through RuvA and exits via RuvB. An RuvB hexamer assembles on each DNA strand where it exits the tetramer. Each RuvB hexamer is contacted by two RuvA subunits (via domain III) on 2 adjacent RuvB subunits; this complex drives branch migration. In the full resolvosome a probable DNA-RuvA(4)-RuvB(12)-RuvC(2) complex forms which resolves the HJ.

Its subcellular location is the cytoplasm. The enzyme catalyses ATP + H2O = ADP + phosphate + H(+). Its function is as follows. The RuvA-RuvB-RuvC complex processes Holliday junction (HJ) DNA during genetic recombination and DNA repair, while the RuvA-RuvB complex plays an important role in the rescue of blocked DNA replication forks via replication fork reversal (RFR). RuvA specifically binds to HJ cruciform DNA, conferring on it an open structure. The RuvB hexamer acts as an ATP-dependent pump, pulling dsDNA into and through the RuvAB complex. RuvB forms 2 homohexamers on either side of HJ DNA bound by 1 or 2 RuvA tetramers; 4 subunits per hexamer contact DNA at a time. Coordinated motions by a converter formed by DNA-disengaged RuvB subunits stimulates ATP hydrolysis and nucleotide exchange. Immobilization of the converter enables RuvB to convert the ATP-contained energy into a lever motion, pulling 2 nucleotides of DNA out of the RuvA tetramer per ATP hydrolyzed, thus driving DNA branch migration. The RuvB motors rotate together with the DNA substrate, which together with the progressing nucleotide cycle form the mechanistic basis for DNA recombination by continuous HJ branch migration. Branch migration allows RuvC to scan DNA until it finds its consensus sequence, where it cleaves and resolves cruciform DNA. This is Holliday junction branch migration complex subunit RuvB from Helicobacter pylori (strain G27).